The primary structure comprises 222 residues: Charged multivesicular body protein 4a (222 aa).

2 disordered regions span residues 1 to 21 (MSGL…TPEE) and 180 to 211 (VGDK…DEDE). The tract at residues 1–116 (MSGLGRLFGK…ELAAQSMKKA (116 aa)) is interaction with phosphoinosides. The segment at 1–150 (MSGLGRLFGK…QISDAISRPM (150 aa)) is intramolecular interaction with C-terminus. 2 coiled-coil regions span residues 20 to 105 (EEAI…VLRT) and 155 to 180 (DVDE…LLNV). Residues 151–222 (GFGDDVDEDE…ALKQLAEWVS (72 aa)) are intramolecular interaction with N-terminus. Position 196 is a phosphoserine (S196).

This sequence belongs to the SNF7 family. Probable core component of the endosomal sorting required for transport complex III (ESCRT-III). ESCRT-III components are thought to multimerize to form a flat lattice on the perimeter membrane of the endosome. Several assembly forms of ESCRT-III may exist that interact and act sequentially. Self-associates; overexpression leads to the assembly of filaments that curve and associate to create circular rings. Interacts with CHMP2A. Interacts with CHMP3; the interaction requires the release of CHMP4A autoinhibition. Interacts with CHMP4B. Interacts with CHMP4C. Interacts with CHMP6. Interacts with VPS4A. Interacts with PDCD6IP; the interaction is direct. As to expression, widely expressed. Expressed at higher level in heart, kidney, liver and skeletal muscle. Also expressed in brain, placenta, lung and pancreas.

It is found in the cytoplasmic vesicle membrane. Its subcellular location is the late endosome membrane. Functionally, probable core component of the endosomal sorting required for transport complex III (ESCRT-III) which is involved in multivesicular bodies (MVBs) formation and sorting of endosomal cargo proteins into MVBs. MVBs contain intraluminal vesicles (ILVs) that are generated by invagination and scission from the limiting membrane of the endosome and mostly are delivered to lysosomes enabling degradation of membrane proteins, such as stimulated growth factor receptors, lysosomal enzymes and lipids. The MVB pathway appears to require the sequential function of ESCRT-O, -I,-II and -III complexes. ESCRT-III proteins mostly dissociate from the invaginating membrane before the ILV is released. The ESCRT machinery also functions in topologically equivalent membrane fission events, such as the terminal stages of cytokinesis and the budding of enveloped viruses (HIV-1 and other lentiviruses). ESCRT-III proteins are believed to mediate the necessary vesicle extrusion and/or membrane fission activities, possibly in conjunction with the AAA ATPase VPS4. When overexpressed, membrane-assembled circular arrays of CHMP4A filaments can promote or stabilize negative curvature and outward budding. Via its interaction with PDCD6IP involved in HIV-1 p6- and p9-dependent virus release. CHMP4A/B/C are required for the exosomal release of SDCBP, CD63 and syndecan. The polypeptide is Charged multivesicular body protein 4a (CHMP4A) (Homo sapiens (Human)).